A 283-amino-acid polypeptide reads, in one-letter code: Bifunctional protein FolD (283 aa).

NADP(+)-binding positions include 166–168 (GAS) and isoleucine 232.

This sequence belongs to the tetrahydrofolate dehydrogenase/cyclohydrolase family. As to quaternary structure, homodimer.

The enzyme catalyses (6R)-5,10-methylene-5,6,7,8-tetrahydrofolate + NADP(+) = (6R)-5,10-methenyltetrahydrofolate + NADPH. The catalysed reaction is (6R)-5,10-methenyltetrahydrofolate + H2O = (6R)-10-formyltetrahydrofolate + H(+). Its pathway is one-carbon metabolism; tetrahydrofolate interconversion. Functionally, catalyzes the oxidation of 5,10-methylenetetrahydrofolate to 5,10-methenyltetrahydrofolate and then the hydrolysis of 5,10-methenyltetrahydrofolate to 10-formyltetrahydrofolate. The polypeptide is Bifunctional protein FolD (Hamiltonella defensa subsp. Acyrthosiphon pisum (strain 5AT)).